The primary structure comprises 536 residues: Nucleosome assembly protein 1-like 3 (536 aa).

Disordered regions lie at residues 1-104 (MAEA…DKLP) and 160-338 (PTEE…KEDP). The span at 35–75 (SNSSSSTTSCGSTGSSSSSSSSSSSSSSSSSGSSGSSSNGS) shows a compositional bias: low complexity. The segment covering 77-95 (LHQKKRVPGPSRRAQRRPS) has biased composition (basic residues). Residues 160-184 (PTEEECEWNSEEEFSGDEEMQDDTP) are compositionally biased toward acidic residues. Basic and acidic residues-rich tracts occupy residues 199 to 220 (GKENTEVKEEVKDVPEEVPEAK) and 227 to 269 (PKET…KTDS). A compositionally biased stretch (polar residues) spans 287–300 (TQANAEYTDQPTED). A compositionally biased stretch (basic and acidic residues) spans 306-324 (PVREAQKRVPETRPEERVN).

The protein belongs to the nucleosome assembly protein (NAP) family.

Its subcellular location is the nucleus. In Rattus norvegicus (Rat), this protein is Nucleosome assembly protein 1-like 3 (Nap1l3).